The sequence spans 1325 residues: uncharacterized protein (1325 aa).

The N-terminal stretch at 1 to 18 (MNRIYRVIWNCTLQVFQA) is a signal peptide. C19 is lipidated: N-palmitoyl cysteine. The S-diacylglycerol cysteine moiety is linked to residue C19.

It to E.coli YfaL.

It localises to the cell membrane. This is an uncharacterized protein from Escherichia coli (strain K12).